The following is a 218-amino-acid chain: Glutathione S-transferase Mu 4 (218 aa).

One can recognise a GST N-terminal domain in the interval 1 to 88 (MPMTLGYWDI…YIARKHNLCG (88 aa)). Residues 7–8 (YW), 46–50 (WLSEK), 59–60 (NL), and 72–73 (QS) each bind glutathione. The GST C-terminal domain maps to 90 to 208 (TEEEKIRVDI…KTSRFLRTPL (119 aa)). A substrate-binding site is contributed by tyrosine 116.

It belongs to the GST superfamily. Mu family. Homodimer. In terms of tissue distribution, widely expressed.

Its subcellular location is the cytoplasm. The enzyme catalyses RX + glutathione = an S-substituted glutathione + a halide anion + H(+). The catalysed reaction is 1-chloro-2,4-dinitrobenzene + glutathione = 2,4-dinitrophenyl-S-glutathione + chloride + H(+). It carries out the reaction (13S,14S)-epoxy-(4Z,7Z,9E,11E,16Z,19Z)-docosahexaenoate + glutathione = (13R)-S-glutathionyl-(14S)-hydroxy-(4Z,7Z,9E,11E,16Z,19Z)-docosahexaenoate. It catalyses the reaction leukotriene C4 = leukotriene A4 + glutathione. Functionally, conjugation of reduced glutathione to a wide number of exogenous and endogenous hydrophobic electrophiles. Catalyzes the conjugation of leukotriene A4 with reduced glutathione (GSH) to form leukotriene C4. Can also catalyze the transfer of a glutathionyl group from glutathione (GSH) to 13(S),14(S)-epoxy-docosahexaenoic acid to form maresin conjugate in tissue regeneration 1 (MCTR1), a bioactive lipid mediator that possess potent anti-inflammatory and proresolving actions. The chain is Glutathione S-transferase Mu 4 from Mus musculus (Mouse).